A 418-amino-acid chain; its full sequence is UDP-N-acetylglucosamine 1-carboxyvinyltransferase (418 aa).

Residue 22–23 participates in phosphoenolpyruvate binding; sequence KN. Arg-92 contributes to the UDP-N-acetyl-alpha-D-glucosamine binding site. Cys-116 acts as the Proton donor in catalysis. Cys-116 bears the 2-(S-cysteinyl)pyruvic acid O-phosphothioketal mark. Residues Asp-305 and Val-327 each coordinate UDP-N-acetyl-alpha-D-glucosamine.

Belongs to the EPSP synthase family. MurA subfamily.

It is found in the cytoplasm. It catalyses the reaction phosphoenolpyruvate + UDP-N-acetyl-alpha-D-glucosamine = UDP-N-acetyl-3-O-(1-carboxyvinyl)-alpha-D-glucosamine + phosphate. It participates in cell wall biogenesis; peptidoglycan biosynthesis. In terms of biological role, cell wall formation. Adds enolpyruvyl to UDP-N-acetylglucosamine. The polypeptide is UDP-N-acetylglucosamine 1-carboxyvinyltransferase (Endomicrobium trichonymphae).